A 586-amino-acid chain; its full sequence is U-box domain-containing protein 73 (586 aa).

The tract at residues 21 to 122 (KADMSGLQRS…AAGADDGPTR (102 aa)) is disordered. Over residues 50–60 (RSAPTSPLRTP) the composition is skewed to low complexity. Residues 182 to 258 (PIPIAHDGTL…SAWCLDHSDL (77 aa)) form the U-box domain.

It carries out the reaction S-ubiquitinyl-[E2 ubiquitin-conjugating enzyme]-L-cysteine + [acceptor protein]-L-lysine = [E2 ubiquitin-conjugating enzyme]-L-cysteine + N(6)-ubiquitinyl-[acceptor protein]-L-lysine.. It participates in protein modification; protein ubiquitination. In terms of biological role, possesses E3 ubiquitin-protein ligase in vitro. This is U-box domain-containing protein 73 (PUB73) from Oryza sativa subsp. japonica (Rice).